The primary structure comprises 349 residues: MNTRTDVTNDNIDKNPTKRGNKNIPGRNERFNDRNRFNNDGNNRPRLQPSPPPRQDNKCREENGDFINIRLCAYEKEYCNDGYLSPAYYMLKQVDDEEMSCWSELSSLVRSKKAVGFPLLKAAKRISHGSMLYFEQFKNSKVVRLTPQVKCLNDTVIFQTVVILYSMYKRDIYSNEFCFDLVSIPRTNIVFSVNQLMFNICTDILVVLSICGNRLYRTNLPQSCYLNFIHGHETIACRGYEHSNYFFEWLIKNHLSLLTKQTMDILKVKKKYATGAPVNRLLEPGTLVYVPKEDYYFIGISLTDVSISDNVRVLFSTDGIVLEIEDFNIKHLFMAGEMFVRSQSSTIIV.

A compositionally biased stretch (polar residues) spans 1–10; sequence MNTRTDVTND. Residues 1 to 60 form a disordered region; the sequence is MNTRTDVTNDNIDKNPTKRGNKNIPGRNERFNDRNRFNNDGNNRPRLQPSPPPRQDNKCR. The segment covering 27 to 37 has biased composition (basic and acidic residues); sequence RNERFNDRNRF. Over residues 38 to 47 the composition is skewed to low complexity; the sequence is NNDGNNRPRL.

This sequence belongs to the orthopoxvirus OPG097 family.

The protein resides in the virion. The protein localises to the host cytoplasm. Its function is as follows. Might be required to be present in the virion for transcription of early genes after primo infection. This chain is Protein OPG097 (OPG097), found in Homo sapiens (Human).